Reading from the N-terminus, the 407-residue chain is Transmembrane protein 184B (407 aa).

Positions 1–24 (MTVRGAALAPDPASPTTAAASPSI) are disordered. A run of 7 helical transmembrane segments spans residues 40-60 (FLMTTAAQAISGFFVWTALLI), 84-104 (ILFIVPIYAFDSWLSLLFFTN), 121-141 (LVIYNFLSLCYEYLGGESSIM), 178-198 (LQFCVVKPLMAVSTVVLQAFG), 214-234 (VTIIYNISVSLALYALFLFYF), 249-269 (FFMVKSVIFLSFWQGMLLAIL), and 290-310 (VAAGYQDFIICVEMFFAALAL). Residues 369 to 395 (TLEPGPTWRGGAHGLSRSHSLSGARDN) form a disordered region. 3 positions are modified to phosphoserine: S388, S402, and S403.

The protein belongs to the TMEM184 family.

The protein resides in the membrane. May activate the MAP kinase signaling pathway. The protein is Transmembrane protein 184B (TMEM184B) of Bos taurus (Bovine).